The chain runs to 432 residues: Trigger factor (432 aa).

One can recognise a PPIase FKBP-type domain in the interval 161–246 (EDRVTIDFTG…LKKVEERGLP (86 aa)).

This sequence belongs to the FKBP-type PPIase family. Tig subfamily.

It localises to the cytoplasm. The catalysed reaction is [protein]-peptidylproline (omega=180) = [protein]-peptidylproline (omega=0). In terms of biological role, involved in protein export. Acts as a chaperone by maintaining the newly synthesized protein in an open conformation. Functions as a peptidyl-prolyl cis-trans isomerase. This chain is Trigger factor, found in Salmonella choleraesuis (strain SC-B67).